We begin with the raw amino-acid sequence, 451 residues long: Probable tyrosyl-DNA phosphodiesterase (451 aa).

Residues 1–34 (MKRTIQETPGPSSTTVPPPKKLNSQRNGSNLEPG) form a disordered region. The span at 22–32 (LNSQRNGSNLE) shows a compositional bias: polar residues. H131 serves as the catalytic Nucleophile. Residue K133 coordinates substrate. The interaction with DNA stretch occupies residues 266–269 (SIGS). H356 acts as the Proton donor/acceptor in catalysis. K358 lines the substrate pocket.

This sequence belongs to the tyrosyl-DNA phosphodiesterase family.

It is found in the nucleus. DNA repair enzyme that can remove a variety of covalent adducts from DNA through hydrolysis of a 3'-phosphodiester bond, giving rise to DNA with a free 3' phosphate. Catalyzes the hydrolysis of dead-end complexes between DNA and the topoisomerase I active site tyrosine residue. Hydrolyzes 3'-phosphoglycolates on protruding 3' ends on DNA double-strand breaks due to DNA damage by radiation and free radicals. Acts on blunt-ended double-strand DNA breaks and on single-stranded DNA. May have low 3'exonuclease activity and may be able to remove a single nucleoside from the 3'end of DNA and RNA molecules with 3'hydroxyl groups. Has no exonuclease activity towards DNA or RNA with a 3'phosphate. The chain is Probable tyrosyl-DNA phosphodiesterase from Caenorhabditis elegans.